The following is a 295-amino-acid chain: Pantothenate synthetase (295 aa).

The active-site Proton donor is the histidine 37. Residue glutamine 61 participates in (R)-pantoate binding. Glutamine 61 serves as a coordination point for beta-alanine. 154-157 (GRKD) is a binding site for ATP. Residue glutamine 160 participates in (R)-pantoate binding. ATP is bound by residues valine 183 and 191–194 (QSSR).

This sequence belongs to the pantothenate synthetase family. As to quaternary structure, homodimer.

It localises to the cytoplasm. The enzyme catalyses (R)-pantoate + beta-alanine + ATP = (R)-pantothenate + AMP + diphosphate + H(+). It participates in cofactor biosynthesis; (R)-pantothenate biosynthesis; (R)-pantothenate from (R)-pantoate and beta-alanine: step 1/1. Catalyzes the condensation of pantoate with beta-alanine in an ATP-dependent reaction via a pantoyl-adenylate intermediate. This chain is Pantothenate synthetase, found in Salinibacter ruber (strain DSM 13855 / M31).